Reading from the N-terminus, the 61-residue chain is L-amino-acid oxidase (61 aa).

Residue 43 to 44 (MA) participates in FAD binding.

It belongs to the flavin monoamine oxidase family. FIG1 subfamily. Homodimer; non-covalently linked. The cofactor is FAD. Post-translationally, N-glycosylated. Expressed by the venom gland.

The protein resides in the secreted. It catalyses the reaction an L-alpha-amino acid + O2 + H2O = a 2-oxocarboxylate + H2O2 + NH4(+). The enzyme catalyses L-leucine + O2 + H2O = 4-methyl-2-oxopentanoate + H2O2 + NH4(+). Catalyzes an oxidative deamination of predominantly hydrophobic and aromatic L-amino acids, thus producing hydrogen peroxide that may contribute to the diverse toxic effects of this enzyme. Shows activity on L-Leu. Exhibits diverse biological activities, such as apoptosis, antibacterial activities against both Gram-negative and Gram-positive bacteria and antiparasitic activities, as well as induction of platelet aggregation. Effects of snake L-amino oxidases on platelets are controversial, since they either induce aggregation or inhibit agonist-induced aggregation. These different effects are probably due to different experimental conditions. This protein may also induce hemorrhage, hemolysis, and edema. This chain is L-amino-acid oxidase, found in Crotalus durissus cascavella (Northeastern Brazilian rattlesnake).